A 365-amino-acid polypeptide reads, in one-letter code: MKKRIALLPGDGIGPEVLESATDVLKSVAERFNHEFEFEYGLIGGAAIDEHHNPLPEETVAACKNADAILLGAVGGPKWDQNPSELRPEKGLLSIRKQLDLFANLRPVKVFESLSDASPLKKEYIDNVDFVIVRELTGGLYFGQPSKRYVNTEGEQEAVDTLFYKRTEIERVIREGFKMAAARKGKVTSVDKANVLESSRLWREVAEDVAQEFPDVKLEHMLVDNAAMQLIYAPNQFDVVVTENMFGDILSDEASMLTGSLGMLPSASLSSSGLHLFEPVHGSAPDIAGKGMANPFAAILSAAMLLRTSFGLEEEAKAVEDAVNKVLASGKRTRDLARSEEFSSTQAITEEVKAAIMSENTISNV.

76–89 contacts NAD(+); it reads GPKWDQNPSELRPE. Substrate contacts are provided by Arg96, Arg106, Arg134, and Asp224. The Mg(2+) site is built by Asp224, Asp248, and Asp252. 282–294 is a binding site for NAD(+); it reads GSAPDIAGKGMAN.

This sequence belongs to the isocitrate and isopropylmalate dehydrogenases family. LeuB type 1 subfamily. Homodimer. The cofactor is Mg(2+). Mn(2+) serves as cofactor.

It localises to the cytoplasm. The enzyme catalyses (2R,3S)-3-isopropylmalate + NAD(+) = 4-methyl-2-oxopentanoate + CO2 + NADH. The protein operates within amino-acid biosynthesis; L-leucine biosynthesis; L-leucine from 3-methyl-2-oxobutanoate: step 3/4. In terms of biological role, catalyzes the oxidation of 3-carboxy-2-hydroxy-4-methylpentanoate (3-isopropylmalate) to 3-carboxy-4-methyl-2-oxopentanoate. The product decarboxylates to 4-methyl-2 oxopentanoate. The protein is 3-isopropylmalate dehydrogenase (leuB) of Bacillus subtilis (strain 168).